The primary structure comprises 321 residues: Probable NAD(P)H-dependent D-xylose reductase xyl1 (321 aa).

Tyr-50 functions as the Proton donor in the catalytic mechanism. His-112 provides a ligand contact to substrate. NAD(+) is bound by residues 166-167 (SN), 215-224 (SSFGPLSFVE), and 271-281 (KSNDPTRLAQN).

Belongs to the aldo/keto reductase family.

It carries out the reaction xylitol + NAD(+) = D-xylose + NADH + H(+). The catalysed reaction is xylitol + NADP(+) = D-xylose + NADPH + H(+). The protein operates within carbohydrate metabolism; D-xylose degradation. In terms of biological role, catalyzes the initial reaction in the xylose utilization pathway by reducing D-xylose into xylitol. Xylose is a major component of hemicelluloses such as xylan. Most fungi utilize D-xylose via three enzymatic reactions, xylose reductase (XR), xylitol dehydrogenase (XDH), and xylulokinase, to form xylulose 5-phosphate, which enters pentose phosphate pathway. This is Probable NAD(P)H-dependent D-xylose reductase xyl1 (xyl1) from Neosartorya fischeri (strain ATCC 1020 / DSM 3700 / CBS 544.65 / FGSC A1164 / JCM 1740 / NRRL 181 / WB 181) (Aspergillus fischerianus).